Reading from the N-terminus, the 876-residue chain is Senescence-induced receptor-like serine/threonine-protein kinase (876 aa).

Residues M1–A24 form the signal peptide. Over Q25–G517 the chain is Extracellular. 3 LRR repeats span residues R415 to T438, S439 to P462, and N463 to H483. The helical transmembrane segment at Y518–F538 threads the bilayer. Over R539–R876 the chain is Cytoplasmic. Residues N574 to Y847 enclose the Protein kinase domain. ATP contacts are provided by residues I580–V588 and K601. Y646 carries the post-translational modification Phosphotyrosine. D697 functions as the Proton acceptor in the catalytic mechanism. Position 731 is a phosphoserine (S731). T732 carries the post-translational modification Phosphothreonine. Phosphotyrosine is present on Y745.

This sequence belongs to the protein kinase superfamily. Ser/Thr protein kinase family.

The protein localises to the membrane. In terms of biological role, involved in innate immune response of plants. This chain is Senescence-induced receptor-like serine/threonine-protein kinase (SIRK), found in Arabidopsis thaliana (Mouse-ear cress).